Here is a 460-residue protein sequence, read N- to C-terminus: Bifunctional protein GlmU (460 aa).

The pyrophosphorylase stretch occupies residues 1–232; the sequence is MENVAAIILA…SDEIMGVNDR (232 aa). UDP-N-acetyl-alpha-D-glucosamine is bound by residues 9 to 12, Lys23, Gln75, and 80 to 81; these read LAAG and GT. A Mg(2+)-binding site is contributed by Asp105. Gly142, Glu157, Asn172, and Asn230 together coordinate UDP-N-acetyl-alpha-D-glucosamine. Asn230 serves as a coordination point for Mg(2+). A linker region spans residues 233 to 253; that stretch reads AQLAQAARILRRRINRDLMLS. The segment at 254–460 is N-acetyltransferase; it reads GVSLVDPEQT…GWRIRMKKKT (207 aa). Residues Arg336 and Lys354 each contribute to the UDP-N-acetyl-alpha-D-glucosamine site. The active-site Proton acceptor is the His366. 2 residues coordinate UDP-N-acetyl-alpha-D-glucosamine: Tyr369 and Asn380. Residues 389–390, Ser408, Ala426, and Arg443 each bind acetyl-CoA; that span reads NY.

The protein in the N-terminal section; belongs to the N-acetylglucosamine-1-phosphate uridyltransferase family. This sequence in the C-terminal section; belongs to the transferase hexapeptide repeat family. In terms of assembly, homotrimer. It depends on Mg(2+) as a cofactor.

Its subcellular location is the cytoplasm. It carries out the reaction alpha-D-glucosamine 1-phosphate + acetyl-CoA = N-acetyl-alpha-D-glucosamine 1-phosphate + CoA + H(+). The enzyme catalyses N-acetyl-alpha-D-glucosamine 1-phosphate + UTP + H(+) = UDP-N-acetyl-alpha-D-glucosamine + diphosphate. It participates in nucleotide-sugar biosynthesis; UDP-N-acetyl-alpha-D-glucosamine biosynthesis; N-acetyl-alpha-D-glucosamine 1-phosphate from alpha-D-glucosamine 6-phosphate (route II): step 2/2. It functions in the pathway nucleotide-sugar biosynthesis; UDP-N-acetyl-alpha-D-glucosamine biosynthesis; UDP-N-acetyl-alpha-D-glucosamine from N-acetyl-alpha-D-glucosamine 1-phosphate: step 1/1. Its pathway is bacterial outer membrane biogenesis; LPS lipid A biosynthesis. Its function is as follows. Catalyzes the last two sequential reactions in the de novo biosynthetic pathway for UDP-N-acetylglucosamine (UDP-GlcNAc). The C-terminal domain catalyzes the transfer of acetyl group from acetyl coenzyme A to glucosamine-1-phosphate (GlcN-1-P) to produce N-acetylglucosamine-1-phosphate (GlcNAc-1-P), which is converted into UDP-GlcNAc by the transfer of uridine 5-monophosphate (from uridine 5-triphosphate), a reaction catalyzed by the N-terminal domain. In Pelobacter propionicus (strain DSM 2379 / NBRC 103807 / OttBd1), this protein is Bifunctional protein GlmU.